A 415-amino-acid polypeptide reads, in one-letter code: MPDSIPSLPDWLSRGMADLFPAGDPSDADQALAARLAQAEKEGRPLRVKLGIDPTGSNIHLGHSILFRKLRAFQDGGHTAVLIIGDFTARIGDPTGKSATRVQLSKEQVAANASTYLRQLGQDQPKETALLDFETPGRLEVRYNSEWLEGMDLPAVIGLLGTGTVGQMLAKDDFSKRYGSGTPIALHEFLYPLLQGYDSVAVNADVELGGTDQKFNVAMGRDLQRHFNKGTQFGLLLPILVGLDGVQKMSKSLGNVVGLEEDPLSMYSKLEKVGDAAIDDYVTLLTDLDLASLPDNPREKQKAMALAVTASRHGIEAAQKAQSDAATLVGGSGDAGADVPEASLAEVNFPAKAFYLFSAVGICASSSEARRQIKGGAARLEGEKITDPNQEFTSAAELEGKVLQLGKKTFRRLVA.

The 'HIGH' region motif lies at 54–63 (PTGSNIHLGH). The short motif at 248-252 (KMSKS) is the 'KMSKS' region element. Lys251 contacts ATP. In terms of domain architecture, S4 RNA-binding spans 351-414 (AKAFYLFSAV…LGKKTFRRLV (64 aa)).

It belongs to the class-I aminoacyl-tRNA synthetase family. TyrS type 2 subfamily. In terms of assembly, homodimer.

The protein localises to the cytoplasm. It catalyses the reaction tRNA(Tyr) + L-tyrosine + ATP = L-tyrosyl-tRNA(Tyr) + AMP + diphosphate + H(+). Catalyzes the attachment of tyrosine to tRNA(Tyr) in a two-step reaction: tyrosine is first activated by ATP to form Tyr-AMP and then transferred to the acceptor end of tRNA(Tyr). The chain is Tyrosine--tRNA ligase from Synechococcus sp. (strain CC9605).